A 399-amino-acid polypeptide reads, in one-letter code: MDTHAFKRSLHHSERYNRRGFGRAEEVAENLEQAYQSGLIGTIRDNGYKLTHGRLNVHLAEAFGFCWGVERAVAMAYETRRHYPSERLWITNEIIHNPSVNDHLREMDVLFIPVEEGVKDFSGVTSGDVVILPAFGATVQEMQLLNERGCHIVDTTCPWVSKVWNTVEKHKKHTFTSVIHGKVKHEETLATSSFAGTYLVVLDLEEAQIVVDYILGKGDREAFMQRFAKACSEGFDPDRDLERLGVANQTTMLKSETEEIGRMFERTMLSKYGPADLNEHFLAYNTICDATQERQDAMFSLVDEPLDLLVVIGGFNSSNTTHLQEIAVSRGIRSFHIDTPDRIDETTNSIEHKPLSEDLKRDQVFLPAGPVTVGITSGASTPDRAVEAVIEKLMRLSEN.

Cys-66 is a binding site for [4Fe-4S] cluster. Residue His-96 coordinates (2E)-4-hydroxy-3-methylbut-2-enyl diphosphate. His-96 provides a ligand contact to dimethylallyl diphosphate. Isopentenyl diphosphate is bound at residue His-96. Position 157 (Cys-157) interacts with [4Fe-4S] cluster. His-185 is a binding site for (2E)-4-hydroxy-3-methylbut-2-enyl diphosphate. His-185 contributes to the dimethylallyl diphosphate binding site. His-185 lines the isopentenyl diphosphate pocket. Glu-187 acts as the Proton donor in catalysis. Position 250 (Thr-250) interacts with (2E)-4-hydroxy-3-methylbut-2-enyl diphosphate. A [4Fe-4S] cluster-binding site is contributed by Cys-288. Residues Ser-317, Ser-318, Asn-319, and Ser-380 each contribute to the (2E)-4-hydroxy-3-methylbut-2-enyl diphosphate site. Dimethylallyl diphosphate contacts are provided by Ser-317, Ser-318, Asn-319, and Ser-380. The isopentenyl diphosphate site is built by Ser-317, Ser-318, Asn-319, and Ser-380.

This sequence belongs to the IspH family. It depends on [4Fe-4S] cluster as a cofactor.

It catalyses the reaction isopentenyl diphosphate + 2 oxidized [2Fe-2S]-[ferredoxin] + H2O = (2E)-4-hydroxy-3-methylbut-2-enyl diphosphate + 2 reduced [2Fe-2S]-[ferredoxin] + 2 H(+). The enzyme catalyses dimethylallyl diphosphate + 2 oxidized [2Fe-2S]-[ferredoxin] + H2O = (2E)-4-hydroxy-3-methylbut-2-enyl diphosphate + 2 reduced [2Fe-2S]-[ferredoxin] + 2 H(+). Its pathway is isoprenoid biosynthesis; dimethylallyl diphosphate biosynthesis; dimethylallyl diphosphate from (2E)-4-hydroxy-3-methylbutenyl diphosphate: step 1/1. It functions in the pathway isoprenoid biosynthesis; isopentenyl diphosphate biosynthesis via DXP pathway; isopentenyl diphosphate from 1-deoxy-D-xylulose 5-phosphate: step 6/6. Functionally, catalyzes the conversion of 1-hydroxy-2-methyl-2-(E)-butenyl 4-diphosphate (HMBPP) into a mixture of isopentenyl diphosphate (IPP) and dimethylallyl diphosphate (DMAPP). Acts in the terminal step of the DOXP/MEP pathway for isoprenoid precursor biosynthesis. In Synechococcus sp. (strain CC9902), this protein is 4-hydroxy-3-methylbut-2-enyl diphosphate reductase.